Consider the following 335-residue polypeptide: MPAVLGFEGSANKIGVGVVRDGTVLANPRRTYVTAPGTGFLPGDTARHHRAVILDLLQEALTEAGLTPKDIDCIAYTKGPGMGAPLASVAVVARTVAQLWNKPLLGVNHCIGHIEMGRLITGAVNPTVLYVSGGNTQVISYSEHRYRIFGETIDIAVGNCLDRFARVLKISNDPSPGYNIEQMAKRGKKLVELPYTVKGMDVSFSGILSFIEDAAQRMLATGECTPEDLCFSLQETVFAMLVEITERAMAHCGSKEALIVGGVGCNVRLQEMMATMCQERGAQLFATDERFCIDNGAMIAQAGWEMFQAGHRTPLQDSGITQRYRTDEVEVTWRD.

3 residues coordinate a divalent metal cation: H109, H113, and Y130. Residues Y130–G134, D162, G177, E181, and N266 each bind substrate. A divalent metal cation is bound at residue D294.

Belongs to the KAE1 / TsaD family. In terms of assembly, component of the EKC/KEOPS complex composed of at least GON7, TP53RK, TPRKB, OSGEP and LAGE3; the whole complex dimerizes. A divalent metal cation is required as a cofactor.

Its subcellular location is the cytoplasm. The protein localises to the nucleus. It catalyses the reaction L-threonylcarbamoyladenylate + adenosine(37) in tRNA = N(6)-L-threonylcarbamoyladenosine(37) in tRNA + AMP + H(+). In terms of biological role, component of the EKC/KEOPS complex that is required for the formation of a threonylcarbamoyl group on adenosine at position 37 (t(6)A37) in tRNAs that read codons beginning with adenine. The complex is probably involved in the transfer of the threonylcarbamoyl moiety of threonylcarbamoyl-AMP (TC-AMP) to the N6 group of A37. OSGEP likely plays a direct catalytic role in this reaction, but requires other protein(s) of the complex to fulfill this activity. The chain is tRNA N6-adenosine threonylcarbamoyltransferase (Osgep) from Rattus norvegicus (Rat).